The following is a 463-amino-acid chain: Increased DNA methylation 3 (463 aa).

Over residues 169–182 (NLDESRETEQDCSR) the composition is skewed to basic and acidic residues. Disordered stretches follow at residues 169 to 199 (NLDESRETEQDCSRNGDATANGVVTNEDYNS) and 300 to 347 (RRFK…TTGT). A compositionally biased stretch (polar residues) spans 184–199 (GDATANGVVTNEDYNS). Basic residues predominate over residues 300-310 (RRFKNSSKKAT).

As to quaternary structure, interacts with MBD7 (via C-terminus), IDM1 and IDM2. Part of a complex made of MBD7, IDM1, IDM2 and IDM3.

The protein resides in the nucleus. Its function is as follows. Acts as an anti-silencing factor that prevents DNA hypermethylation and gene repression. The sequence is that of Increased DNA methylation 3 from Arabidopsis thaliana (Mouse-ear cress).